Consider the following 393-residue polypeptide: Protein FAM53C (393 aa).

Position 1 is an N-acetylmethionine (methionine 1). Positions 77-120 (HLRPPSRGNSPKEPPLSQVLSPEPPDPEKLPVPPAPPSKRHCRS) are disordered. Residues serine 122 and serine 162 each carry the phosphoserine modification. 2 disordered regions span residues 141–167 (LWTP…PKRV) and 204–283 (QPCA…ARKT). Positions 204–215 (QPCATSPQSGSW) are enriched in polar residues. A phosphoserine mark is found at serine 232, serine 234, serine 255, serine 273, and serine 299. The segment covering 241–256 (ASRFLPSARSSPASSP) has biased composition (low complexity). Positions 343–355 (SCSPVEGSSQVLS) are enriched in low complexity. The segment at 343–365 (SCSPVEGSSQVLSESEEEEEGSV) is disordered.

It belongs to the FAM53 family.

The chain is Protein FAM53C from Mus musculus (Mouse).